The sequence spans 258 residues: 5'-nucleotidase SurE (258 aa).

A divalent metal cation contacts are provided by Asp-8, Asp-9, Ser-39, and Asn-95.

Belongs to the SurE nucleotidase family. The cofactor is a divalent metal cation.

The protein resides in the cytoplasm. It catalyses the reaction a ribonucleoside 5'-phosphate + H2O = a ribonucleoside + phosphate. Its function is as follows. Nucleotidase that shows phosphatase activity on nucleoside 5'-monophosphates. The polypeptide is 5'-nucleotidase SurE (Methanobrevibacter smithii (strain ATCC 35061 / DSM 861 / OCM 144 / PS)).